We begin with the raw amino-acid sequence, 1232 residues long: Histone-lysine N-methyltransferase MECOM (1232 aa).

Residues 22–68 form a disordered region; the sequence is PEIPLEEMPDADADGITSVPSLHIQEPCSPATSSESFTPKEGSPYKA. Residues 25-34 are compositionally biased toward acidic residues; that stretch reads PLEEMPDADA. In terms of domain architecture, SET spans 80–192; that stretch reads DEFELRESTM…PGEELLLFMK (113 aa). Residues Lys-101 and Lys-192 each participate in a glycyl lysine isopeptide (Lys-Gly) (interchain with G-Cter in SUMO2) cross-link. The segment at 191–442 is interaction with SUV39H1 and probably MAPK9 and SMAD3; sequence MKSEEDPHEP…NHFAAGGFFG (252 aa). C2H2-type zinc fingers lie at residues 211–238, 265–287, 293–315, 321–344, and 350–372; these read HRCE…STPH, QDCK…MLSH, YKCD…QMSH, YECE…RSQH, and HACP…KHIH. Residue Lys-294 forms a Glycyl lysine isopeptide (Lys-Gly) (interchain with G-Cter in SUMO2) linkage. Glycyl lysine isopeptide (Lys-Gly) (interchain with G-Cter in SUMO2) cross-links involve residues Lys-369 and Lys-376. The segment at 378 to 400 adopts a C2H2-type 6 zinc-finger fold; the sequence is FICEVCHKSYTQFSNLCRHKRMH. Residues 407 to 429 form a C2H2-type 7; atypical zinc finger; it reads IKCKDCGQMFSTTSSLNKHRRFC. Glycyl lysine isopeptide (Lys-Gly) (interchain with G-Cter in SUMO2) cross-links involve residues Lys-432, Lys-525, Lys-545, Lys-549, and Lys-557. The disordered stretch occupies residues 548–622; sequence SKHPPVGDNK…KCKENGKMFK (75 aa). Positions 562 to 577 are enriched in basic and acidic residues; that stretch reads LPERSSEERPLEKISD. The span at 588-600 shows a compositional bias: polar residues; the sequence is STPSGSDLETTSG. The span at 608–622 shows a compositional bias: basic and acidic residues; it reads ESDKEKCKENGKMFK. The Nuclear localization signal signature appears at 611 to 624; it reads KEKCKENGKMFKDK. Lys-624 participates in a covalent cross-link: Glycyl lysine isopeptide (Lys-Gly) (interchain with G-Cter in SUMO2). Ser-626 is subject to Phosphoserine. Glycyl lysine isopeptide (Lys-Gly) (interchain with G-Cter in SUMO2) cross-links involve residues Lys-637, Lys-665, Lys-687, and Lys-723. Positions 720–823 are disordered; the sequence is LPLKMEPQSP…DGSLQHARPT (104 aa). Phosphoserine is present on Ser-728. Residues Lys-733, Lys-734, and Lys-737 each participate in a glycyl lysine isopeptide (Lys-Gly) (interchain with G-Cter in SUMO2) cross-link. Ser-742 is subject to Phosphoserine. The short motif at 743–747 is the CTBP-binding motif 1 element; sequence PFDLT. Residues Lys-751, Lys-754, and Lys-762 each participate in a glycyl lysine isopeptide (Lys-Gly) (interchain with G-Cter in SUMO2) cross-link. Residues 758–773 are compositionally biased toward polar residues; the sequence is SGPSKPSGTPATSQDQ. Positions 774–778 match the CTBP-binding motif 2 motif; the sequence is PLDLS. Glycyl lysine isopeptide (Lys-Gly) (interchain with G-Cter in SUMO2) cross-links involve residues Lys-789, Lys-802, and Lys-803. Residues 791 to 805 are compositionally biased toward basic and acidic residues; sequence TEPRKNHVFGEKKGS. Residues 806–816 show a composition bias toward polar residues; it reads NMDTRPSSDGS. Residues Lys-837, Lys-846, Lys-848, and Lys-879 each participate in a glycyl lysine isopeptide (Lys-Gly) (interchain with G-Cter in SUMO2) cross-link. 3 C2H2-type zinc fingers span residues 914-936, 942-965, and 971-993; these read YTCR…LRTH, YRCK…RNIH, and FKCH…LKKH. A Glycyl lysine isopeptide (Lys-Gly) (interchain with G-Cter in SUMO2) cross-link involves residue Lys-1020. Residues 1032–1043 show a composition bias toward polar residues; sequence IGNSNHGSQSPR. Positions 1032–1107 are disordered; the sequence is IGNSNHGSQS…GVTRLDEEIP (76 aa). 2 positions are modified to phosphoserine: Ser-1039 and Ser-1041. The segment covering 1044-1059 has biased composition (basic and acidic residues); that stretch reads NMEERMNGSHFKDKKA. Residues Lys-1055 and Lys-1058 each participate in a glycyl lysine isopeptide (Lys-Gly) (interchain with G-Cter in SUMO2) cross-link. Positions 1068–1088 are enriched in acidic residues; sequence LLDDEEVEDEVLLDEEDEDND. The span at 1089–1104 shows a compositional bias: basic and acidic residues; the sequence is IPGKPRKELGVTRLDE. Glycyl lysine isopeptide (Lys-Gly) (interchain with G-Cter in SUMO2) cross-links involve residues Lys-1122, Lys-1129, Lys-1134, Lys-1151, Lys-1178, and Lys-1186.

Homooligomer. Interacts with CTBP1. Interacts with SMAD3 (via MH2 domain); the interaction is direct. Interacts with SMAD4; through interaction with SMAD3. Interacts with CREBBP, KAT2B and histone deacetylases. Interacts with MAPK8 and MAPK9; inhibits JNK signaling. Interacts with SUV39H1 (via SET domain); enhances MECOM transcriptional repression activity. May be acetylated by CREBBP and KAT2B.

Its subcellular location is the nucleus. The protein localises to the nucleus speckle. It localises to the cytoplasm. The catalysed reaction is L-lysyl(9)-[histone H3] + S-adenosyl-L-methionine = N(6)-methyl-L-lysyl(9)-[histone H3] + S-adenosyl-L-homocysteine + H(+). In terms of biological role, functions as a transcriptional regulator binding to DNA sequences in the promoter region of target genes and regulating positively or negatively their expression. Oncogene which plays a role in development, cell proliferation and differentiation. May also play a role in apoptosis through regulation of the JNK and TGF-beta signaling. Involved in hematopoiesis. Functionally, displays histone methyltransferase activity and monomethylates 'Lys-9' of histone H3 (H3K9me1) in vitro. Probably catalyzes the monomethylation of free histone H3 in the cytoplasm which is then transported to the nucleus and incorporated into nucleosomes where SUV39H methyltransferases use it as a substrate to catalyze histone H3 'Lys-9' trimethylation. Likely to be one of the primary histone methyltransferases along with PRDM16 that direct cytoplasmic H3K9me1 methylation. The chain is Histone-lysine N-methyltransferase MECOM from Mus musculus (Mouse).